Consider the following 416-residue polypeptide: Tyrosine aminotransferase (416 aa).

Lys253 is subject to N6-(pyridoxal phosphate)lysine.

The protein belongs to the class-I pyridoxal-phosphate-dependent aminotransferase family. As to quaternary structure, homodimer. Pyridoxal 5'-phosphate serves as cofactor. The N-terminus is blocked.

It localises to the cytoplasm. The protein resides in the mitochondrion. It carries out the reaction L-tyrosine + 2-oxoglutarate = 3-(4-hydroxyphenyl)pyruvate + L-glutamate. Its pathway is amino-acid degradation; L-phenylalanine degradation; acetoacetate and fumarate from L-phenylalanine: step 2/6. Functionally, transaminase involved in tyrosine breakdown. Converts tyrosine to p-hydroxyphenylpyruvate. The sequence is that of Tyrosine aminotransferase from Trypanosoma cruzi.